A 638-amino-acid chain; its full sequence is 1-deoxy-D-xylulose-5-phosphate synthase (638 aa).

Residues H79 and 120-122 each bind thiamine diphosphate; that span reads AHS. D151 contributes to the Mg(2+) binding site. Residues 152–153, N180, Y289, and E371 contribute to the thiamine diphosphate site; that span reads GA. N180 contacts Mg(2+).

It belongs to the transketolase family. DXPS subfamily. Homodimer. Mg(2+) is required as a cofactor. It depends on thiamine diphosphate as a cofactor.

The enzyme catalyses D-glyceraldehyde 3-phosphate + pyruvate + H(+) = 1-deoxy-D-xylulose 5-phosphate + CO2. Its pathway is metabolic intermediate biosynthesis; 1-deoxy-D-xylulose 5-phosphate biosynthesis; 1-deoxy-D-xylulose 5-phosphate from D-glyceraldehyde 3-phosphate and pyruvate: step 1/1. Functionally, catalyzes the acyloin condensation reaction between C atoms 2 and 3 of pyruvate and glyceraldehyde 3-phosphate to yield 1-deoxy-D-xylulose-5-phosphate (DXP). The polypeptide is 1-deoxy-D-xylulose-5-phosphate synthase (Rhizobium rhizogenes (strain K84 / ATCC BAA-868) (Agrobacterium radiobacter)).